The following is a 355-amino-acid chain: uncharacterized protein (355 aa).

Gly58–Lys65 is an ATP binding site.

This is an uncharacterized protein from Ureaplasma parvum serovar 3 (strain ATCC 700970).